The chain runs to 230 residues: Probable dual specificity protein phosphatase DDB_G0283417 (230 aa).

The Tyrosine-protein phosphatase domain maps to 78 to 230; the sequence is NNNYESINLY…LEIFEKELLF (153 aa). Catalysis depends on Cys-174, which acts as the Phosphocysteine intermediate.

This sequence belongs to the protein-tyrosine phosphatase family. Non-receptor class dual specificity subfamily.

The catalysed reaction is O-phospho-L-tyrosyl-[protein] + H2O = L-tyrosyl-[protein] + phosphate. It catalyses the reaction O-phospho-L-seryl-[protein] + H2O = L-seryl-[protein] + phosphate. The enzyme catalyses O-phospho-L-threonyl-[protein] + H2O = L-threonyl-[protein] + phosphate. Functionally, has a dual specificity toward Ser/Thr and Tyr-containing proteins. The polypeptide is Probable dual specificity protein phosphatase DDB_G0283417 (Dictyostelium discoideum (Social amoeba)).